A 471-amino-acid polypeptide reads, in one-letter code: 6-phosphofructo-2-kinase/fructose-2,6-bisphosphatase 1 (471 aa).

Ser2 bears the N-acetylserine mark. Residues 2 to 250 form a 6-phosphofructo-2-kinase region; sequence SREMGELTQT…AYYLMNIHVT (249 aa). Ser33 is modified (phosphoserine; by PKA). Residue 49 to 57 participates in ATP binding; sequence GLPARGKTY. 2 residues coordinate beta-D-fructose 6-phosphate: Arg82 and Arg105. Residue Asp131 is part of the active site. Residues Thr133 and Arg139 each coordinate beta-D-fructose 6-phosphate. A Phosphoserine modification is found at Ser141. Cys161 is a catalytic residue. Position 170 to 175 (170 to 175) interacts with ATP; sequence NIKQVK. Residues Lys175, Arg196, and Tyr200 each contribute to the beta-D-fructose 6-phosphate site. The tract at residues 251–471 is fructose-2,6-bisphosphatase; sequence PRSIYLCRHG…EALDTVPAHY (221 aa). Arg258 provides a ligand contact to beta-D-fructose 2,6-bisphosphate. His259 acts as the Tele-phosphohistidine intermediate in catalysis. Residues Asn265, Gly271, and Arg308 each coordinate beta-D-fructose 2,6-bisphosphate. The active-site Proton donor/acceptor is the Glu328. Beta-D-fructose 2,6-bisphosphate-binding residues include Tyr339, Arg353, Lys357, Tyr368, Gln394, and Arg398. 350 to 353 provides a ligand contact to ATP; it reads FALR. ATP contacts are provided by residues 394-398 and Tyr430; that span reads QAVMR.

This sequence in the C-terminal section; belongs to the phosphoglycerate mutase family. Homodimer. Liver.

The enzyme catalyses beta-D-fructose 2,6-bisphosphate + H2O = beta-D-fructose 6-phosphate + phosphate. It catalyses the reaction beta-D-fructose 6-phosphate + ATP = beta-D-fructose 2,6-bisphosphate + ADP + H(+). With respect to regulation, phosphorylation at Ser-33 inhibits the kinase and activates the bisphosphatase. In terms of biological role, synthesis and degradation of fructose 2,6-bisphosphate. In Rattus norvegicus (Rat), this protein is 6-phosphofructo-2-kinase/fructose-2,6-bisphosphatase 1.